The primary structure comprises 429 residues: Adenylosuccinate synthetase (429 aa).

Residues 12-18 and 40-42 contribute to the GTP site; these read GDEGKGK and GHT. Residue Asp13 is the Proton acceptor of the active site. Mg(2+) contacts are provided by Asp13 and Gly40. Residues 13–16, 38–41, Thr129, Arg143, Gln224, Thr239, and Arg303 contribute to the IMP site; these read DEGK and NAGH. Catalysis depends on His41, which acts as the Proton donor. 299-305 contributes to the substrate binding site; the sequence is VTTGRAR. GTP is bound by residues Arg305, 331–333, and 413–415; these read KLD and GVG.

The protein belongs to the adenylosuccinate synthetase family. Homodimer. It depends on Mg(2+) as a cofactor.

Its subcellular location is the cytoplasm. The catalysed reaction is IMP + L-aspartate + GTP = N(6)-(1,2-dicarboxyethyl)-AMP + GDP + phosphate + 2 H(+). The protein operates within purine metabolism; AMP biosynthesis via de novo pathway; AMP from IMP: step 1/2. Its function is as follows. Plays an important role in the de novo pathway of purine nucleotide biosynthesis. Catalyzes the first committed step in the biosynthesis of AMP from IMP. The chain is Adenylosuccinate synthetase from Rhodococcus opacus (strain B4).